Here is a 355-residue protein sequence, read N- to C-terminus: Probable GTP 3',8-cyclase (355 aa).

The region spanning 5–233 (AYGRPLKDLR…GRLHNRRVYR (229 aa)) is the Radical SAM core domain. Residue Arg14 participates in GTP binding. Residues Cys21, Cys25, and Cys28 each coordinate [4Fe-4S] cluster. Lys69 serves as a coordination point for GTP. Position 73 (Gly73) interacts with S-adenosyl-L-methionine. Position 97 (Thr97) interacts with GTP. Ser121 lines the S-adenosyl-L-methionine pocket. Residue Lys157 coordinates GTP. [4Fe-4S] cluster is bound by residues Cys252 and Cys255. 257–259 (RVR) provides a ligand contact to GTP. Cys269 provides a ligand contact to [4Fe-4S] cluster.

It belongs to the radical SAM superfamily. MoaA family. [4Fe-4S] cluster is required as a cofactor.

It carries out the reaction GTP + AH2 + S-adenosyl-L-methionine = (8S)-3',8-cyclo-7,8-dihydroguanosine 5'-triphosphate + 5'-deoxyadenosine + L-methionine + A + H(+). It participates in cofactor biosynthesis; molybdopterin biosynthesis. In terms of biological role, catalyzes the cyclization of GTP to (8S)-3',8-cyclo-7,8-dihydroguanosine 5'-triphosphate. The protein is Probable GTP 3',8-cyclase of Aeropyrum pernix (strain ATCC 700893 / DSM 11879 / JCM 9820 / NBRC 100138 / K1).